Reading from the N-terminus, the 117-residue chain is Large ribosomal subunit protein bL19 (117 aa).

This sequence belongs to the bacterial ribosomal protein bL19 family.

Functionally, this protein is located at the 30S-50S ribosomal subunit interface and may play a role in the structure and function of the aminoacyl-tRNA binding site. The polypeptide is Large ribosomal subunit protein bL19 (Thioalkalivibrio sulfidiphilus (strain HL-EbGR7)).